The following is a 144-amino-acid chain: Large ribosomal subunit protein uL11 (144 aa).

It belongs to the universal ribosomal protein uL11 family. As to quaternary structure, part of the ribosomal stalk of the 50S ribosomal subunit. Interacts with L10 and the large rRNA to form the base of the stalk. L10 forms an elongated spine to which L12 dimers bind in a sequential fashion forming a multimeric L10(L12)X complex. Contacts the CTC protein (RL25). One or more lysine residues are methylated.

Forms part of the ribosomal stalk which helps the ribosome interact with GTP-bound translation factors. The polypeptide is Large ribosomal subunit protein uL11 (Deinococcus radiodurans (strain ATCC 13939 / DSM 20539 / JCM 16871 / CCUG 27074 / LMG 4051 / NBRC 15346 / NCIMB 9279 / VKM B-1422 / R1)).